The sequence spans 380 residues: O-phospho-L-seryl-tRNA:Cys-tRNA synthase (380 aa).

Pyridoxal 5'-phosphate-binding positions include 86-87 (AR), Asn-192, and 215-217 (SGH). Lys-218 is modified (N6-(pyridoxal phosphate)lysine).

Belongs to the SepCysS family. Homodimer. Interacts with SepRS. Requires pyridoxal 5'-phosphate as cofactor.

The enzyme catalyses O-phospho-L-seryl-tRNA(Cys) + hydrogen sulfide + H(+) = L-cysteinyl-tRNA(Cys) + phosphate. Functionally, converts O-phospho-L-seryl-tRNA(Cys) (Sep-tRNA(Cys)) to L-cysteinyl-tRNA(Cys) (Cys-tRNA(Cys)). This Methanococcus maripaludis (strain C7 / ATCC BAA-1331) protein is O-phospho-L-seryl-tRNA:Cys-tRNA synthase.